We begin with the raw amino-acid sequence, 479 residues long: Glycogen synthase (479 aa).

Residue lysine 16 coordinates ADP-alpha-D-glucose.

The protein belongs to the glycosyltransferase 1 family. Bacterial/plant glycogen synthase subfamily.

It catalyses the reaction [(1-&gt;4)-alpha-D-glucosyl](n) + ADP-alpha-D-glucose = [(1-&gt;4)-alpha-D-glucosyl](n+1) + ADP + H(+). The protein operates within glycan biosynthesis; glycogen biosynthesis. Its function is as follows. Synthesizes alpha-1,4-glucan chains using ADP-glucose. The chain is Glycogen synthase from Lactiplantibacillus plantarum (strain ATCC BAA-793 / NCIMB 8826 / WCFS1) (Lactobacillus plantarum).